Consider the following 292-residue polypeptide: Non-homologous end joining protein Ku (292 aa).

The Ku domain occupies Lys-12–Ala-196. The disordered stretch occupies residues Lys-231–Gly-292. The span at Ala-271–Gly-292 shows a compositional bias: basic residues.

This sequence belongs to the prokaryotic Ku family. Homodimer. Interacts with LigD.

With LigD forms a non-homologous end joining (NHEJ) DNA repair enzyme, which repairs dsDNA breaks with reduced fidelity. Binds linear dsDNA with 5'- and 3'- overhangs but not closed circular dsDNA nor ssDNA. Recruits and stimulates the ligase activity of LigD. The sequence is that of Non-homologous end joining protein Ku from Bradyrhizobium sp. (strain ORS 278).